The chain runs to 320 residues: MNQTLNSSGTAELALNHSRGSVVHAACLVLSSLAMFTCLCGMAGNSMVIWLLGFRMRRTPFSIYILNLAAADLLFVFCMAAMLSLETQPLVSTTDKVHELMKRLKYFAYTVGLSLLTAISTQRCLSVLFPIWFKCHRPRHLSAWVCALLWMLCLLTNGLTSCFCSKFLKFNKDQCFRVDMVQAALIMGVLTPVMTLSSLTLFVRVRRSSQQWRRQPTRLFVVVLASVLVFLICSLPLGFYWFVLYWLNLPPDTKVLYFNLSRLSSSMSSSANPLIYFLVGSRRSRRLQGSLGTVLQRALREEPELEGGETPTTGTNEMGA.

Residues 1-33 (MNQTLNSSGTAELALNHSRGSVVHAACLVLSSL) are Extracellular-facing. N-linked (GlcNAc...) asparagine glycosylation is found at asparagine 2, asparagine 6, and asparagine 16. Residues 34-54 (AMFTCLCGMAGNSMVIWLLGF) form a helical membrane-spanning segment. At 55 to 62 (RMRRTPFS) the chain is on the cytoplasmic side. The chain crosses the membrane as a helical span at residues 63-83 (IYILNLAAADLLFVFCMAAML). At 84–112 (SLETQPLVSTTDKVHELMKRLKYFAYTVG) the chain is on the extracellular side. A helical membrane pass occupies residues 113–133 (LSLLTAISTQRCLSVLFPIWF). Residues 134 to 142 (KCHRPRHLS) lie on the Cytoplasmic side of the membrane. A helical membrane pass occupies residues 143–163 (AWVCALLWMLCLLTNGLTSCF). The Extracellular portion of the chain corresponds to 164-182 (CSKFLKFNKDQCFRVDMVQ). The helical transmembrane segment at 183–203 (AALIMGVLTPVMTLSSLTLFV) threads the bilayer. Topologically, residues 204–218 (RVRRSSQQWRRQPTR) are cytoplasmic. Residues 219 to 239 (LFVVVLASVLVFLICSLPLGF) form a helical membrane-spanning segment. Topologically, residues 240-257 (YWFVLYWLNLPPDTKVLY) are extracellular. Residues 258-280 (FNLSRLSSSMSSSANPLIYFLVG) form a helical membrane-spanning segment. At 281-320 (SRRSRRLQGSLGTVLQRALREEPELEGGETPTTGTNEMGA) the chain is on the cytoplasmic side. Residues 301–320 (EEPELEGGETPTTGTNEMGA) are disordered. Residues 308–320 (GETPTTGTNEMGA) show a composition bias toward low complexity.

This sequence belongs to the G-protein coupled receptor 1 family. Mas subfamily. As to expression, co-expressed in the small diameter neurons with P2X3 and VR1 in dorsal root ganglia.

Its subcellular location is the cell membrane. In terms of biological role, may regulate nociceptor function and/or development, including the sensation or modulation of pain. Functions as a specific membrane receptor for beta-alanine. The receptor couples with G-protein G(q) and G(i). This Macaca fascicularis (Crab-eating macaque) protein is Mas-related G-protein coupled receptor member D (MRGPRD).